The sequence spans 210 residues: Uridine kinase (210 aa).

An ATP-binding site is contributed by 12–19 (GGSGSGKT).

Belongs to the uridine kinase family.

It is found in the cytoplasm. The enzyme catalyses uridine + ATP = UMP + ADP + H(+). The catalysed reaction is cytidine + ATP = CMP + ADP + H(+). Its pathway is pyrimidine metabolism; CTP biosynthesis via salvage pathway; CTP from cytidine: step 1/3. It functions in the pathway pyrimidine metabolism; UMP biosynthesis via salvage pathway; UMP from uridine: step 1/1. The chain is Uridine kinase from Bacillus pumilus (strain SAFR-032).